A 138-amino-acid chain; its full sequence is Translation initiation factor 5A (138 aa).

Lysine 37 carries the hypusine modification.

It belongs to the eIF-5A family.

The protein resides in the cytoplasm. Its function is as follows. Functions by promoting the formation of the first peptide bond. The chain is Translation initiation factor 5A from Pyrococcus furiosus (strain ATCC 43587 / DSM 3638 / JCM 8422 / Vc1).